A 61-amino-acid polypeptide reads, in one-letter code: MATTTEKLKNFFAELRRVLLVTKKPGWKEFKMAAKITGIGMILIGLIGLVIRMIGYLITGA.

The chain crosses the membrane as a helical span at residues 38 to 58 (GIGMILIGLIGLVIRMIGYLI).

The protein belongs to the SecE/SEC61-gamma family. Component of the Sec protein translocase complex. Heterotrimer consisting of SecY (alpha), SecG (beta) and SecE (gamma) subunits. The heterotrimers can form oligomers, although 1 heterotrimer is thought to be able to translocate proteins. Interacts with the ribosome. May interact with SecDF, and other proteins may be involved.

It localises to the cell membrane. In terms of biological role, essential subunit of the Sec protein translocation channel SecYEG. Clamps together the 2 halves of SecY. May contact the channel plug during translocation. This chain is Protein translocase subunit SecE, found in Thermococcus onnurineus (strain NA1).